The sequence spans 610 residues: Dihydroxy-acid dehydratase (610 aa).

Asp-81 provides a ligand contact to Mg(2+). Residue Cys-122 participates in [2Fe-2S] cluster binding. 2 residues coordinate Mg(2+): Asp-123 and Lys-124. Lys-124 carries the N6-carboxylysine modification. Cys-193 serves as a coordination point for [2Fe-2S] cluster. Residue Glu-489 coordinates Mg(2+). Catalysis depends on Ser-515, which acts as the Proton acceptor.

Belongs to the IlvD/Edd family. As to quaternary structure, homodimer. Requires [2Fe-2S] cluster as cofactor. It depends on Mg(2+) as a cofactor.

It catalyses the reaction (2R)-2,3-dihydroxy-3-methylbutanoate = 3-methyl-2-oxobutanoate + H2O. The enzyme catalyses (2R,3R)-2,3-dihydroxy-3-methylpentanoate = (S)-3-methyl-2-oxopentanoate + H2O. It participates in amino-acid biosynthesis; L-isoleucine biosynthesis; L-isoleucine from 2-oxobutanoate: step 3/4. It functions in the pathway amino-acid biosynthesis; L-valine biosynthesis; L-valine from pyruvate: step 3/4. Its function is as follows. Functions in the biosynthesis of branched-chain amino acids. Catalyzes the dehydration of (2R,3R)-2,3-dihydroxy-3-methylpentanoate (2,3-dihydroxy-3-methylvalerate) into 2-oxo-3-methylpentanoate (2-oxo-3-methylvalerate) and of (2R)-2,3-dihydroxy-3-methylbutanoate (2,3-dihydroxyisovalerate) into 2-oxo-3-methylbutanoate (2-oxoisovalerate), the penultimate precursor to L-isoleucine and L-valine, respectively. The protein is Dihydroxy-acid dehydratase of Xylella fastidiosa (strain M23).